Consider the following 132-residue polypeptide: Large ribosomal subunit protein bL19 (132 aa).

The protein belongs to the bacterial ribosomal protein bL19 family.

Its function is as follows. This protein is located at the 30S-50S ribosomal subunit interface and may play a role in the structure and function of the aminoacyl-tRNA binding site. This is Large ribosomal subunit protein bL19 from Maricaulis maris (strain MCS10) (Caulobacter maris).